The following is a 406-amino-acid chain: Cysteine desulfurase (406 aa).

An N6-(pyridoxal phosphate)lysine modification is found at K226. Residue C364 is the Cysteine persulfide intermediate of the active site.

This sequence belongs to the class-V pyridoxal-phosphate-dependent aminotransferase family. Csd subfamily. As to quaternary structure, homodimer. Interacts with SufE and the SufBCD complex composed of SufB, SufC and SufD. The interaction with SufE is required to mediate the direct transfer of the sulfur atom from the S-sulfanylcysteine. The cofactor is pyridoxal 5'-phosphate.

Its subcellular location is the cytoplasm. It carries out the reaction (sulfur carrier)-H + L-cysteine = (sulfur carrier)-SH + L-alanine. The enzyme catalyses L-selenocysteine + AH2 = hydrogenselenide + L-alanine + A + H(+). Its pathway is cofactor biosynthesis; iron-sulfur cluster biosynthesis. Cysteine desulfurases mobilize the sulfur from L-cysteine to yield L-alanine, an essential step in sulfur metabolism for biosynthesis of a variety of sulfur-containing biomolecules. Component of the suf operon, which is activated and required under specific conditions such as oxidative stress and iron limitation. Acts as a potent selenocysteine lyase in vitro, that mobilizes selenium from L-selenocysteine. Selenocysteine lyase activity is however unsure in vivo. The sequence is that of Cysteine desulfurase from Escherichia coli O7:K1 (strain IAI39 / ExPEC).